We begin with the raw amino-acid sequence, 61 residues long: Beta-defensin 13 (61 aa).

A signal peptide spans 1-21 (MRLLYLLFAAVMLLFLQAVPA). A 1,2-diacyl-sn-glycero-3-phosphate-binding residues include Ser24, Arg40, His44, Asn51, Asn53, Gly54, His58, and Lys61. 3 cysteine pairs are disulfide-bonded: Cys31–Cys59, Cys38–Cys52, and Cys42–Cys60.

Belongs to the beta-defensin family. In terms of assembly, monomeric. Forms multimeric, probably including tetrameric, complexes in the presence of phospholipid phosphatidic acid.

The protein localises to the secreted. In terms of biological role, exhibits antimicrobial activity against fungi. Antimicrobial activity in a pH-dependent manner against the yeast C.albicans; activity is salt tolerant and retains antifungal activity in NaCl concentrations of 100mM. Permeabilizes C.albicans cell membranes via targeting plasma membrane phospholipid phosphatidic acid. This chain is Beta-defensin 13, found in Crocodylus porosus (Saltwater crocodile).